We begin with the raw amino-acid sequence, 500 residues long: L-arabinose isomerase (500 aa).

4 residues coordinate Mn(2+): glutamate 306, glutamate 333, histidine 349, and histidine 448.

This sequence belongs to the arabinose isomerase family. It depends on Mn(2+) as a cofactor.

The catalysed reaction is beta-L-arabinopyranose = L-ribulose. The protein operates within carbohydrate degradation; L-arabinose degradation via L-ribulose; D-xylulose 5-phosphate from L-arabinose (bacterial route): step 1/3. Functionally, catalyzes the conversion of L-arabinose to L-ribulose. This Shewanella sp. (strain MR-4) protein is L-arabinose isomerase.